The sequence spans 352 residues: MTQISERLLVQAHLDAKQPNPLTAEQEAEYRAAIAAELKAQNAVLVAHYYCDPVIQALAEETGGCVSDSLEMARFGKNHPAETVIVAGVRFMGETAKILTPEKRVLMPTLEATCSLDLGCPVEEFSAFCDQHPERTVVVYANTSAAVKARADWVVTSSCALEIVESLMDNGETIIWGPDQHLGRYIQKQTGADMLLWDGACIVHEEFKSRQLADMKALYPDAAILVHPESPEAVIELADAVGSTSQLIKAAQTLPNKTFIVATDRGIFYKMQQLCPDKEFVEAPTAGNGAACRSCAHCPWMAMNTLERVLDCLRKGGDEIFVDPALVPKAIKPLNRMLDFTQAARLKLSGNA.

Histidine 48 and serine 69 together coordinate iminosuccinate. Cysteine 114 contributes to the [4Fe-4S] cluster binding site. Iminosuccinate contacts are provided by residues 140-142 (YAN) and serine 157. Cysteine 201 is a [4Fe-4S] cluster binding site. Residues 227–229 (HPE) and threonine 244 contribute to the iminosuccinate site. [4Fe-4S] cluster is bound at residue cysteine 298.

It belongs to the quinolinate synthase family. Type 1 subfamily. [4Fe-4S] cluster serves as cofactor.

It localises to the cytoplasm. The enzyme catalyses iminosuccinate + dihydroxyacetone phosphate = quinolinate + phosphate + 2 H2O + H(+). Its pathway is cofactor biosynthesis; NAD(+) biosynthesis; quinolinate from iminoaspartate: step 1/1. Catalyzes the condensation of iminoaspartate with dihydroxyacetone phosphate to form quinolinate. The sequence is that of Quinolinate synthase from Pseudomonas putida (strain GB-1).